The primary structure comprises 207 residues: Oligoribonuclease (207 aa).

The 164-residue stretch at 20–183 (LVWLDMEMTG…ADIHESIDEL (164 aa)) folds into the Exonuclease domain. Tyr141 is a catalytic residue.

Belongs to the oligoribonuclease family.

It is found in the cytoplasm. Functionally, 3'-to-5' exoribonuclease specific for small oligoribonucleotides. The protein is Oligoribonuclease of Paraburkholderia xenovorans (strain LB400).